We begin with the raw amino-acid sequence, 302 residues long: Deubiquitinase OTUD6B (302 aa).

The span at 1–10 (MEGSEDEEAE) shows a compositional bias: acidic residues. 2 disordered regions span residues 1-52 (MEGS…KQLA) and 99-121 (EQQI…AALE). Residues 106 to 116 (RISKAQKRREK) show a composition bias toward basic residues. Positions 156–293 (LEIKQIPSDG…GEHYNSVKLL (138 aa)) constitute an OTU domain. The segment at 161 to 167 (IPSDGHC) is cys-loop. Aspartate 164 is an active-site residue. Cysteine 167 functions as the Nucleophile in the catalytic mechanism. The variable-loop stretch occupies residues 228 to 238 (IANTAAWGGQL). A his-loop region spans residues 276-286 (YMRHAYGLGEH). Residue histidine 286 is part of the active site.

It catalyses the reaction Thiol-dependent hydrolysis of ester, thioester, amide, peptide and isopeptide bonds formed by the C-terminal Gly of ubiquitin (a 76-residue protein attached to proteins as an intracellular targeting signal).. Functionally, deubiquitinating enzyme that may play a role in the ubiquitin-dependent regulation of different cellular processes. The sequence is that of Deubiquitinase OTUD6B (OTUD6B) from Gallus gallus (Chicken).